Here is a 118-residue protein sequence, read N- to C-terminus: Large ribosomal subunit protein bL19 (118 aa).

It belongs to the bacterial ribosomal protein bL19 family.

Functionally, this protein is located at the 30S-50S ribosomal subunit interface and may play a role in the structure and function of the aminoacyl-tRNA binding site. The protein is Large ribosomal subunit protein bL19 of Marinobacter nauticus (strain ATCC 700491 / DSM 11845 / VT8) (Marinobacter aquaeolei).